The chain runs to 874 residues: Protein Son (874 aa).

Disordered regions lie at residues 1 to 45 (MTEN…ERPD), 68 to 98 (RRSNSNELGNNDESGESESSASADDKKNIKP), and 120 to 368 (ELLD…SRDL). Positions 12 to 24 (ETPQVAGSQTNPP) are enriched in polar residues. Positions 70 to 89 (SNSNELGNNDESGESESSAS) are enriched in low complexity. Basic residues-rich tracts occupy residues 128–147 (KKKKKVKKEKKDKKAKKKKT) and 162–175 (KHKHKRKKHKHKDI). Basic and acidic residues-rich tracts occupy residues 176 to 219 (RVKD…KDKF) and 226 to 277 (SEKE…ERVR). The G-patch domain occupies 705-751 (TGGMGMALLQKMGWKPGEGLGRCKTGSLQPLLLDVKLDKRGLVSRDD). The DRBM domain occupies 800–870 (HPVCVLNELT…AALCLRSLGI (71 aa)).

In terms of tissue distribution, expressed in ovarian nurse cells (at protein level).

It is found in the nucleus. In terms of biological role, RNA-binding protein that protects nascent transcripts containing intronic transposable sequences, known as INE-1, from being degraded by DIP1. Modulates DIP1 activity by repressing its sumoylation levels. This ensures that intronic sequences will be degradated only after splicing. In the ovaries, regulates germline stem cells (GSCs) self-renewal by repressing the expression of the GSC differentiation-promoting factor Rga. The sequence is that of Protein Son from Drosophila melanogaster (Fruit fly).